The primary structure comprises 206 residues: MPKVDLFNQNGEKVGDLQLADSVFGVEVNTYAMHQVVKALLANKRQGTQSAKTRAEVSGGGIKPWRQKGTGRARQGSIRAPQWIHGGIVFAPKPRDYRMSIPKSMKKVAIKSALTSKVNEKLMVVVDDIKLETPKTKEVVKMLNAFNAKKTLIITNNAEENVYKSARNIEGVQIIPVNNINVYDILKYDKVVITKDAVSKIEEVYA.

The segment at 47–75 (GTQSAKTRAEVSGGGIKPWRQKGTGRARQ) is disordered.

This sequence belongs to the universal ribosomal protein uL4 family. Part of the 50S ribosomal subunit.

Its function is as follows. One of the primary rRNA binding proteins, this protein initially binds near the 5'-end of the 23S rRNA. It is important during the early stages of 50S assembly. It makes multiple contacts with different domains of the 23S rRNA in the assembled 50S subunit and ribosome. Forms part of the polypeptide exit tunnel. The chain is Large ribosomal subunit protein uL4 from Clostridium botulinum (strain 657 / Type Ba4).